A 423-amino-acid polypeptide reads, in one-letter code: Putative UPF0496 protein 5 (423 aa).

Basic residues predominate over residues 1–14 (MGNRHGIMRPRRLA). The segment at 1-37 (MGNRHGIMRPRRLASGRSAAEEEEDGEGEPGSYEAAC) is disordered. Transmembrane regions (helical) follow at residues 224-244 (IVFL…AAIA) and 247-267 (PVAA…GKWM).

The protein belongs to the UPF0496 family.

The protein resides in the membrane. The polypeptide is Putative UPF0496 protein 5 (Oryza sativa subsp. japonica (Rice)).